The sequence spans 237 residues: NADPH-dependent FMN reductase ArsH (237 aa).

FMN-binding positions include 39–46 (SNRECSYS) and 102–107 (SPERHG).

Belongs to the ArsH family. In terms of assembly, homotetramer. FMN serves as cofactor.

Functionally, has NADPH-dependent FMN reductase activity and high NADPH-dependent ferric reductase activity with highest activity for Fe(3+) as substrate. No activity with NADH, iron trichloride, Cu(2+) or Ag(+). May be involved in cytosolic ferric iron assimilation as an NADPH-dependent ferric reductase in vivo. The protein is NADPH-dependent FMN reductase ArsH of Acidithiobacillus ferrooxidans (strain ATCC 23270 / DSM 14882 / CIP 104768 / NCIMB 8455) (Ferrobacillus ferrooxidans (strain ATCC 23270)).